A 231-amino-acid polypeptide reads, in one-letter code: Ribosomal RNA small subunit methyltransferase G (231 aa).

S-adenosyl-L-methionine is bound by residues glycine 92, leucine 97, 143-144 (VE), and arginine 162.

The protein belongs to the methyltransferase superfamily. RNA methyltransferase RsmG family.

The protein localises to the cytoplasm. The enzyme catalyses guanosine(527) in 16S rRNA + S-adenosyl-L-methionine = N(7)-methylguanosine(527) in 16S rRNA + S-adenosyl-L-homocysteine. In terms of biological role, specifically methylates the N7 position of guanine in position 527 of 16S rRNA. In Burkholderia thailandensis (strain ATCC 700388 / DSM 13276 / CCUG 48851 / CIP 106301 / E264), this protein is Ribosomal RNA small subunit methyltransferase G.